The sequence spans 241 residues: 3-oxoacyl-[acyl-carrier-protein] reductase FabG (241 aa).

NADP(+) is bound by residues glycine 13–glycine 16, serine 38, glutamate 57–valine 58, and asparagine 83. Residue serine 135 participates in substrate binding. The Proton acceptor role is filled by tyrosine 148. Residues tyrosine 148–lysine 152 and isoleucine 181 contribute to the NADP(+) site.

Belongs to the short-chain dehydrogenases/reductases (SDR) family. In terms of assembly, homotetramer.

The enzyme catalyses a (3R)-hydroxyacyl-[ACP] + NADP(+) = a 3-oxoacyl-[ACP] + NADPH + H(+). It functions in the pathway lipid metabolism; fatty acid biosynthesis. Its function is as follows. Catalyzes the NADPH-dependent reduction of beta-ketoacyl-ACP substrates to beta-hydroxyacyl-ACP products, the first reductive step in the elongation cycle of fatty acid biosynthesis. This is 3-oxoacyl-[acyl-carrier-protein] reductase FabG (fabG) from Rickettsia typhi (strain ATCC VR-144 / Wilmington).